The following is a 490-amino-acid chain: Cytochrome P450 2C7 (490 aa).

R144 is subject to Dimethylated arginine. C435 serves as a coordination point for heme.

Belongs to the cytochrome P450 family. It depends on heme as a cofactor.

The protein resides in the endoplasmic reticulum membrane. Its subcellular location is the microsome membrane. The catalysed reaction is an organic molecule + reduced [NADPH--hemoprotein reductase] + O2 = an alcohol + oxidized [NADPH--hemoprotein reductase] + H2O + H(+). In terms of biological role, cytochromes P450 are a group of heme-thiolate monooxygenases. In liver microsomes, this enzyme is involved in an NADPH-dependent electron transport pathway. It oxidizes a variety of structurally unrelated compounds, including steroids, fatty acids, and xenobiotics. In Rattus norvegicus (Rat), this protein is Cytochrome P450 2C7 (Cyp2c7).